The chain runs to 499 residues: Lysine--tRNA ligase (499 aa).

Residues Glu-408 and Glu-415 each coordinate Mg(2+).

It belongs to the class-II aminoacyl-tRNA synthetase family. In terms of assembly, homodimer. Mg(2+) is required as a cofactor.

It localises to the cytoplasm. It carries out the reaction tRNA(Lys) + L-lysine + ATP = L-lysyl-tRNA(Lys) + AMP + diphosphate. The polypeptide is Lysine--tRNA ligase (Bacillus cereus (strain G9842)).